The primary structure comprises 228 residues: 7-cyano-7-deazaguanine synthase (228 aa).

Leucine 8–leucine 18 contributes to the ATP binding site. Zn(2+) is bound by residues cysteine 188, cysteine 198, cysteine 201, and cysteine 204.

This sequence belongs to the QueC family. The cofactor is Zn(2+).

It carries out the reaction 7-carboxy-7-deazaguanine + NH4(+) + ATP = 7-cyano-7-deazaguanine + ADP + phosphate + H2O + H(+). The protein operates within purine metabolism; 7-cyano-7-deazaguanine biosynthesis. Functionally, catalyzes the ATP-dependent conversion of 7-carboxy-7-deazaguanine (CDG) to 7-cyano-7-deazaguanine (preQ(0)). The protein is 7-cyano-7-deazaguanine synthase of Legionella pneumophila (strain Paris).